Reading from the N-terminus, the 594-residue chain is MASSIKTVILFLLPLLLAYSVLAAPDITDGGDKPGPEIDDGGGDKPVPGNNDGASDYAKPAFEPEFMGAWVIDNPNAGVAAMQLQLMPNDQIVWFDTTSLGASGYKLPEGTPCPINPDANNQPDCYAHGIAYDWKTSKYRPLTLQGDAWCSSGNLWPNGNLMATGGTFSGDKAIRVIANDDPKGDFTTKIGALADTRWYSSNQVLPDGSSVVLGGRDSYSYEIVPPQMEFKPKRFDLPFMQQTTEPPLGPGRPVENNLYPFLFLLPDGNIFLFANNRAITFEPATGKTVKEFPVLPGGSRNYPPSGSAALFPLKLTADNAPVIPEIVICGGNQPNAYELVDARHVTEKQFLPALQDCNRIQPMAADAAWIPEQNMPSPRTMGDLIHLANGDMLMLNGAKKGTSGWEDATEANLTPVLYTPYKPMGQRFKELTPTTIARMYHSCSALLPDTRVLVAGSNMHQFYTFDTEFPTELRVEKFSPPYLDPALETERTQIDPANTDAVLKYGKPFKITAALMEKQPLVLGEVKVTLLYPPFTTHGFSQNQRMIVPAITSVQNGVITAVAPPSGQIAPPGYYIMFVSHLGIPGAGIWVHID.

The signal sequence occupies residues 1 to 23; that stretch reads MASSIKTVILFLLPLLLAYSVLA. A disordered region spans residues 28 to 56; the sequence is TDGGDKPGPEIDDGGGDKPVPGNNDGASD.

The N-terminus is blocked. In terms of processing, glycosylated. As to expression, expressed in pollen (at protein level).

The protein resides in the cytoplasm. The enzyme catalyses an aldehyde + O2 + H2O = a carboxylate + H2O2 + H(+). Functionally, catalyzes the oxidation of aldehydes to the corresponding carboxylate by coupling the reaction to the reduction of dioxygen to hydrogen peroxide. Substrates include glyoxal and other aldehydes. Does not have enzymatic activity on D-galactose. The sequence is that of Putative aldehyde oxidase Art an 7 from Artemisia annua (Sweet wormwood).